The primary structure comprises 258 residues: Cobalt-precorrin-4 C(11)-methyltransferase (258 aa).

This sequence belongs to the precorrin methyltransferase family. In terms of assembly, homodimer.

The catalysed reaction is Co-precorrin-4 + S-adenosyl-L-methionine = Co-precorrin-5A + S-adenosyl-L-homocysteine + H(+). It participates in cofactor biosynthesis; adenosylcobalamin biosynthesis; cob(II)yrinate a,c-diamide from sirohydrochlorin (anaerobic route): step 4/10. Its function is as follows. Catalyzes the methylation of C-11 in cobalt-precorrin-4 to form cobalt-precorrin-5A. The polypeptide is Cobalt-precorrin-4 C(11)-methyltransferase (cbiF) (Priestia megaterium (Bacillus megaterium)).